A 173-amino-acid polypeptide reads, in one-letter code: VQ motif-containing protein 31 (173 aa).

Residues 27-36 carry the VQ motif; the sequence is FREIVQRLTG. Thr-46 carries the post-translational modification Phosphothreonine. 2 disordered regions span residues 76–105 and 143–173; these read EIVK…TSPV and LHPS…SGKP. Over residues 86–105 the composition is skewed to polar residues; that stretch reads PTGTTPSSKSGNTNLLTSPV. Phosphoserine occurs at positions 92, 103, 146, and 149. A compositionally biased stretch (low complexity) spans 154-165; sequence TEPELLTLFPLT. Thr-165 bears the Phosphothreonine mark. Residues Ser-166 and Ser-170 each carry the phosphoserine modification.

Phosphorylated on serine and threonine residues by MPK6.

It localises to the nucleus. In terms of biological role, may modulate WRKY transcription factor activities. This chain is VQ motif-containing protein 31, found in Arabidopsis thaliana (Mouse-ear cress).